Reading from the N-terminus, the 493-residue chain is UDP-N-acetylmuramoyl-L-alanyl-D-glutamate--2,6-diaminopimelate ligase (493 aa).

A UDP-N-acetyl-alpha-D-muramoyl-L-alanyl-D-glutamate-binding site is contributed by S31. ATP is bound at residue 111–117 (GTNGKTT). Residues N152, 153–154 (TT), S180, and R188 contribute to the UDP-N-acetyl-alpha-D-muramoyl-L-alanyl-D-glutamate site. K220 is modified (N6-carboxylysine). Meso-2,6-diaminopimelate is bound by residues R386, 410 to 413 (DNPR), G462, and E466. Positions 410–413 (DNPR) match the Meso-diaminopimelate recognition motif motif.

This sequence belongs to the MurCDEF family. MurE subfamily. Mg(2+) serves as cofactor. In terms of processing, carboxylation is probably crucial for Mg(2+) binding and, consequently, for the gamma-phosphate positioning of ATP.

It localises to the cytoplasm. The catalysed reaction is UDP-N-acetyl-alpha-D-muramoyl-L-alanyl-D-glutamate + meso-2,6-diaminopimelate + ATP = UDP-N-acetyl-alpha-D-muramoyl-L-alanyl-gamma-D-glutamyl-meso-2,6-diaminopimelate + ADP + phosphate + H(+). It participates in cell wall biogenesis; peptidoglycan biosynthesis. Its function is as follows. Catalyzes the addition of meso-diaminopimelic acid to the nucleotide precursor UDP-N-acetylmuramoyl-L-alanyl-D-glutamate (UMAG) in the biosynthesis of bacterial cell-wall peptidoglycan. In Oceanobacillus iheyensis (strain DSM 14371 / CIP 107618 / JCM 11309 / KCTC 3954 / HTE831), this protein is UDP-N-acetylmuramoyl-L-alanyl-D-glutamate--2,6-diaminopimelate ligase (murE1).